Here is a 367-residue protein sequence, read N- to C-terminus: Chorismate synthase (367 aa).

Position 48 (arginine 48) interacts with NADP(+). FMN is bound by residues 125 to 127 (RSS), 243 to 244 (NA), glycine 283, 298 to 302 (KPTSS), and arginine 324.

This sequence belongs to the chorismate synthase family. In terms of assembly, homotetramer. It depends on FMNH2 as a cofactor.

It catalyses the reaction 5-O-(1-carboxyvinyl)-3-phosphoshikimate = chorismate + phosphate. The protein operates within metabolic intermediate biosynthesis; chorismate biosynthesis; chorismate from D-erythrose 4-phosphate and phosphoenolpyruvate: step 7/7. In terms of biological role, catalyzes the anti-1,4-elimination of the C-3 phosphate and the C-6 proR hydrogen from 5-enolpyruvylshikimate-3-phosphate (EPSP) to yield chorismate, which is the branch point compound that serves as the starting substrate for the three terminal pathways of aromatic amino acid biosynthesis. This reaction introduces a second double bond into the aromatic ring system. The polypeptide is Chorismate synthase (Psychrobacter arcticus (strain DSM 17307 / VKM B-2377 / 273-4)).